We begin with the raw amino-acid sequence, 244 residues long: Cobalt transport protein CbiM (244 aa).

Positions 1-28 are cleaved as a signal peptide; it reads MKLLKNKKVTFVALLAILAVLSTQSVSA. Transmembrane regions (helical) follow at residues 36 to 56, 71 to 91, 108 to 128, 135 to 155, 166 to 186, and 208 to 228; these read LPLF…VVGL, TMLA…IPSV, FGPS…ALLL, TLGA…YFVY, PVSI…TTSI, and GVFL…TVVL.

Belongs to the CbiM family. In terms of assembly, forms an energy-coupling factor (ECF) transporter complex composed of an ATP-binding protein (A component, CbiO), a transmembrane protein (T component, CbiQ) and 2 possible substrate-capture proteins (S components, CbiM and CbiN) of unknown stoichimetry.

Its subcellular location is the cell membrane. The protein operates within cofactor biosynthesis; adenosylcobalamin biosynthesis. In terms of biological role, part of the energy-coupling factor (ECF) transporter complex CbiMNOQ involved in cobalt import. In Streptococcus sanguinis (strain SK36), this protein is Cobalt transport protein CbiM.